The sequence spans 296 residues: MIKQYLQVTKPGIIFGNLISVIGGFLLAAQGRIDYPLFLATLVGVSLVVASGCVFNNVIDRDIDKKMERTKNRVLVKGLISLKVTLVYASLLGIAGFALLYIAANPLAMWLAVMGFVVYVGVYSLYMKRHSVYGTLIGSLSGAAPPVIGYCAVSNQFDAGALILLLIFSLWQMPHSYAIAIFRFKDYQAANIPVLPVVKGISVAKNHITLYIVAFAVATLMLSLGGYAGYKYLIVAAAVSVWWLGMALSGYKNAIDDRVWARKLFVFSIVAITSLSVMMSVDSMAPAHEVLLTYLR.

Helical transmembrane passes span 11–31 (PGIIFGNLISVIGGFLLAAQG), 35–55 (YPLFLATLVGVSLVVASGCVF), 84–104 (VTLVYASLLGIAGFALLYIAA), 107–127 (LAMWLAVMGFVVYVGVYSLYM), 132–152 (VYGTLIGSLSGAAPPVIGYCA), 162–182 (LILLLIFSLWQMPHSYAIAIF), 208–228 (ITLYIVAFAVATLMLSLGGYA), 229–249 (GYKYLIVAAAVSVWWLGMALS), and 264–284 (LFVFSIVAITSLSVMMSVDSM).

The protein belongs to the UbiA prenyltransferase family. Protoheme IX farnesyltransferase subfamily.

Its subcellular location is the cell inner membrane. The enzyme catalyses heme b + (2E,6E)-farnesyl diphosphate + H2O = Fe(II)-heme o + diphosphate. It participates in porphyrin-containing compound metabolism; heme O biosynthesis; heme O from protoheme: step 1/1. Converts heme B (protoheme IX) to heme O by substitution of the vinyl group on carbon 2 of heme B porphyrin ring with a hydroxyethyl farnesyl side group. In Pectobacterium carotovorum subsp. carotovorum (strain PC1), this protein is Protoheme IX farnesyltransferase.